Consider the following 92-residue polypeptide: Small ribosomal subunit protein uS19c (92 aa).

This sequence belongs to the universal ribosomal protein uS19 family.

It is found in the plastid. It localises to the chloroplast. In terms of biological role, protein S19 forms a complex with S13 that binds strongly to the 16S ribosomal RNA. The protein is Small ribosomal subunit protein uS19c of Spirogyra maxima (Green alga).